The primary structure comprises 239 residues: Sugar fermentation stimulation protein homolog (239 aa).

Belongs to the SfsA family.

The polypeptide is Sugar fermentation stimulation protein homolog (Synechococcus sp. (strain JA-3-3Ab) (Cyanobacteria bacterium Yellowstone A-Prime)).